The chain runs to 250 residues: 1-(5-phosphoribosyl)-5-[(5-phosphoribosylamino)methylideneamino] imidazole-4-carboxamide isomerase (250 aa).

Residue aspartate 7 is the Proton acceptor of the active site. Aspartate 129 (proton donor) is an active-site residue.

This sequence belongs to the HisA/HisF family.

The protein resides in the cytoplasm. It carries out the reaction 1-(5-phospho-beta-D-ribosyl)-5-[(5-phospho-beta-D-ribosylamino)methylideneamino]imidazole-4-carboxamide = 5-[(5-phospho-1-deoxy-D-ribulos-1-ylimino)methylamino]-1-(5-phospho-beta-D-ribosyl)imidazole-4-carboxamide. The protein operates within amino-acid biosynthesis; L-histidine biosynthesis; L-histidine from 5-phospho-alpha-D-ribose 1-diphosphate: step 4/9. The polypeptide is 1-(5-phosphoribosyl)-5-[(5-phosphoribosylamino)methylideneamino] imidazole-4-carboxamide isomerase (Shewanella denitrificans (strain OS217 / ATCC BAA-1090 / DSM 15013)).